Consider the following 273-residue polypeptide: GDNF family receptor alpha-4 (273 aa).

Residue Asn192 is glycosylated (N-linked (GlcNAc...) asparagine). Asn250 carries the GPI-anchor amidated asparagine lipid modification. Positions 251–273 are cleaved as a propeptide — removed in mature form; sequence AGCCFLWVSSMSILTALALQALL.

This sequence belongs to the GDNFR family. As to quaternary structure, interacts with ARTN ligand and RET: forms a 2:2:2 ternary complex composed of ARTN ligand, GFRA3 and RET receptor. Interacts with SORL1. Weakly expressed in heart, brain and testis.

The protein localises to the cell membrane. The protein resides in the secreted. Receptor for persephin (PSPN), a growth factor that exhibits neurotrophic activity on mesencephalic dopaminergic and motor neurons. Acts by binding to its coreceptor, GFRA4, leading to autophosphorylation and activation of the RET receptor. May be important in C-cell development and, in the postnatal development of the adrenal medulla. This is GDNF family receptor alpha-4 (Gfra4) from Rattus norvegicus (Rat).